The primary structure comprises 115 residues: Nucleoid-associated protein Npun_F0448 (115 aa).

Belongs to the YbaB/EbfC family. In terms of assembly, homodimer.

Its subcellular location is the cytoplasm. It is found in the nucleoid. In terms of biological role, binds to DNA and alters its conformation. May be involved in regulation of gene expression, nucleoid organization and DNA protection. In Nostoc punctiforme (strain ATCC 29133 / PCC 73102), this protein is Nucleoid-associated protein Npun_F0448.